We begin with the raw amino-acid sequence, 284 residues long: MEMO1 family protein STK_20620 (284 aa).

This sequence belongs to the MEMO1 family.

The chain is MEMO1 family protein STK_20620 from Sulfurisphaera tokodaii (strain DSM 16993 / JCM 10545 / NBRC 100140 / 7) (Sulfolobus tokodaii).